Consider the following 532-residue polypeptide: Light-independent protochlorophyllide reductase subunit B (532 aa).

Residue Asp36 participates in [4Fe-4S] cluster binding. Residue Asp282 is the Proton donor of the active site. A substrate-binding site is contributed by 417-418 (GL).

This sequence belongs to the ChlB/BchB/BchZ family. Protochlorophyllide reductase is composed of three subunits; BchL, BchN and BchB. Forms a heterotetramer of two BchB and two BchN subunits. Requires [4Fe-4S] cluster as cofactor.

The catalysed reaction is chlorophyllide a + oxidized 2[4Fe-4S]-[ferredoxin] + 2 ADP + 2 phosphate = protochlorophyllide a + reduced 2[4Fe-4S]-[ferredoxin] + 2 ATP + 2 H2O. It functions in the pathway porphyrin-containing compound metabolism; bacteriochlorophyll biosynthesis (light-independent). In terms of biological role, component of the dark-operative protochlorophyllide reductase (DPOR) that uses Mg-ATP and reduced ferredoxin to reduce ring D of protochlorophyllide (Pchlide) to form chlorophyllide a (Chlide). This reaction is light-independent. The NB-protein (BchN-BchB) is the catalytic component of the complex. The chain is Light-independent protochlorophyllide reductase subunit B from Methylobacterium radiotolerans (strain ATCC 27329 / DSM 1819 / JCM 2831 / NBRC 15690 / NCIMB 10815 / 0-1).